The sequence spans 312 residues: Bifunctional pinoresinol-lariciresinol reductase (312 aa).

NADP(+) is bound by residues Gly10–Gly16, Arg35, and Lys44. The Proton acceptor role is filled by Lys139. Arg143 is an NADP(+) binding site. His271 contributes to the substrate binding site.

Belongs to the NmrA-type oxidoreductase family. Isoflavone reductase subfamily. In terms of assembly, dimer. Expressed in young stems, young roots and petioles. In stems, expressed in radial parenchyma cells and in the cambial cells of developing secondary xylem.

The catalysed reaction is (+)-lariciresinol + NADP(+) = (+)-pinoresinol + NADPH + H(+). It catalyses the reaction (-)-secoisolariciresinol + NADP(+) = (+)-lariciresinol + NADPH + H(+). Its function is as follows. Reductase involved in lignan biosynthesis. Catalyzes the enantioselective sequential conversion of (+)-pinoresinol into (+)-lariciresinol and of (+)-lariciresinol into (-)-secoisolariciresinol. Abstracts the 4R-hydride from the NADPH cofactor during catalysis. This Forsythia intermedia (Border forsythia) protein is Bifunctional pinoresinol-lariciresinol reductase (PLR_Fi1).